Reading from the N-terminus, the 389-residue chain is tRNA-specific 2-thiouridylase MnmA (389 aa).

ATP-binding positions include 9–16 and Met35; that span reads GMSGGVDS. Residues 95 to 97 form an interaction with target base in tRNA region; the sequence is NPD. Residue Cys100 is the Nucleophile of the active site. A disulfide bridge links Cys100 with Cys196. Gly124 contacts ATP. An interaction with tRNA region spans residues 146–148; that stretch reads KDQ. The active-site Cysteine persulfide intermediate is Cys196. The segment at 308 to 309 is interaction with tRNA; it reads RY.

It belongs to the MnmA/TRMU family.

Its subcellular location is the cytoplasm. It carries out the reaction S-sulfanyl-L-cysteinyl-[protein] + uridine(34) in tRNA + AH2 + ATP = 2-thiouridine(34) in tRNA + L-cysteinyl-[protein] + A + AMP + diphosphate + H(+). Its function is as follows. Catalyzes the 2-thiolation of uridine at the wobble position (U34) of tRNA, leading to the formation of s(2)U34. In Burkholderia ambifaria (strain MC40-6), this protein is tRNA-specific 2-thiouridylase MnmA.